A 451-amino-acid chain; its full sequence is Aspartate aminotransferase, mitochondrial (451 aa).

Residues Gly-52, Trp-155, and Asn-216 each coordinate L-aspartate. The residue at position 286 (Lys-286) is an N6-(pyridoxal phosphate)lysine. Position 423 (Arg-423) interacts with L-aspartate.

It belongs to the class-I pyridoxal-phosphate-dependent aminotransferase family. As to quaternary structure, homodimer. Pyridoxal 5'-phosphate is required as a cofactor.

The protein localises to the mitochondrion matrix. It carries out the reaction L-aspartate + 2-oxoglutarate = oxaloacetate + L-glutamate. In terms of biological role, plays a key role in amino acid metabolism. Important for metabolite exchange between mitochondria and cytosol. In Saccharomyces cerevisiae (strain ATCC 204508 / S288c) (Baker's yeast), this protein is Aspartate aminotransferase, mitochondrial (AAT1).